Reading from the N-terminus, the 213-residue chain is High frequency lysogenization protein HflD (213 aa).

Residues 99 to 126 are a coiled coil; the sequence is LSSAKGALDTLGNRINGLQRQLEHFDLQ.

Belongs to the HflD family. Interacts with CII protein from phage lambda.

It localises to the cytoplasm. The protein localises to the cell inner membrane. Negative regulator of phage lambda lysogenization. Contributes to the degradation of the phage regulatory protein CII. Acts probably by holding CII on the membrane surface, away from the target promoters, but close to the FtsH protease. In Escherichia coli O157:H7, this protein is High frequency lysogenization protein HflD.